A 111-amino-acid polypeptide reads, in one-letter code: Large ribosomal subunit protein uL22 (111 aa).

Belongs to the universal ribosomal protein uL22 family. Part of the 50S ribosomal subunit.

Functionally, this protein binds specifically to 23S rRNA; its binding is stimulated by other ribosomal proteins, e.g. L4, L17, and L20. It is important during the early stages of 50S assembly. It makes multiple contacts with different domains of the 23S rRNA in the assembled 50S subunit and ribosome. In terms of biological role, the globular domain of the protein is located near the polypeptide exit tunnel on the outside of the subunit, while an extended beta-hairpin is found that lines the wall of the exit tunnel in the center of the 70S ribosome. The protein is Large ribosomal subunit protein uL22 of Clostridioides difficile (strain 630) (Peptoclostridium difficile).